The sequence spans 248 residues: 2,3-bisphosphoglycerate-dependent phosphoglycerate mutase (248 aa).

Substrate is bound by residues 8–15 (RHGESEWN), 21–22 (TG), arginine 60, 87–90 (ERHY), lysine 98, 114–115 (RR), and 183–184 (GN). Residue histidine 9 is the Tele-phosphohistidine intermediate of the active site. Glutamate 87 acts as the Proton donor/acceptor in catalysis.

The protein belongs to the phosphoglycerate mutase family. BPG-dependent PGAM subfamily.

The catalysed reaction is (2R)-2-phosphoglycerate = (2R)-3-phosphoglycerate. The protein operates within carbohydrate degradation; glycolysis; pyruvate from D-glyceraldehyde 3-phosphate: step 3/5. Its function is as follows. Catalyzes the interconversion of 2-phosphoglycerate and 3-phosphoglycerate. This chain is 2,3-bisphosphoglycerate-dependent phosphoglycerate mutase, found in Coprothermobacter proteolyticus (strain ATCC 35245 / DSM 5265 / OCM 4 / BT).